The sequence spans 205 residues: dITP/XTP pyrophosphatase (205 aa).

Thr-16–Lys-21 contacts substrate. Mg(2+)-binding residues include Glu-48 and Asp-77. Asp-77 serves as the catalytic Proton acceptor. Substrate-binding positions include Ser-78, Phe-162 to Asp-165, Lys-185, and His-190 to Arg-191.

Belongs to the HAM1 NTPase family. As to quaternary structure, homodimer. It depends on Mg(2+) as a cofactor.

The enzyme catalyses XTP + H2O = XMP + diphosphate + H(+). It carries out the reaction dITP + H2O = dIMP + diphosphate + H(+). It catalyses the reaction ITP + H2O = IMP + diphosphate + H(+). Its function is as follows. Pyrophosphatase that catalyzes the hydrolysis of nucleoside triphosphates to their monophosphate derivatives, with a high preference for the non-canonical purine nucleotides XTP (xanthosine triphosphate), dITP (deoxyinosine triphosphate) and ITP. Seems to function as a house-cleaning enzyme that removes non-canonical purine nucleotides from the nucleotide pool, thus preventing their incorporation into DNA/RNA and avoiding chromosomal lesions. The polypeptide is dITP/XTP pyrophosphatase (Erwinia tasmaniensis (strain DSM 17950 / CFBP 7177 / CIP 109463 / NCPPB 4357 / Et1/99)).